Here is a 535-residue protein sequence, read N- to C-terminus: Phosphoenolpyruvate carboxykinase (ATP) (535 aa).

Positions 59, 201, and 207 each coordinate substrate. Residues lysine 207, histidine 226, and 243–251 each bind ATP; that span reads GLSGTGKTT. Residues lysine 207 and histidine 226 each coordinate Mn(2+). Aspartate 264 contributes to the Mn(2+) binding site. ATP is bound by residues glutamate 292, arginine 328, 444 to 445, and threonine 450; that span reads RI. Arginine 328 is a substrate binding site.

The protein belongs to the phosphoenolpyruvate carboxykinase (ATP) family. The cofactor is Mn(2+).

The protein localises to the cytoplasm. The enzyme catalyses oxaloacetate + ATP = phosphoenolpyruvate + ADP + CO2. The protein operates within carbohydrate biosynthesis; gluconeogenesis. Functionally, involved in the gluconeogenesis. Catalyzes the conversion of oxaloacetate (OAA) to phosphoenolpyruvate (PEP) through direct phosphoryl transfer between the nucleoside triphosphate and OAA. The polypeptide is Phosphoenolpyruvate carboxykinase (ATP) (Porphyromonas gingivalis (strain ATCC 33277 / DSM 20709 / CIP 103683 / JCM 12257 / NCTC 11834 / 2561)).